The primary structure comprises 69 residues: Microcin H47 immunity protein MchI (69 aa).

The Cytoplasmic portion of the chain corresponds to 1–6; it reads MSYKKL. The chain crosses the membrane as a helical span at residues 7 to 29; sequence YQLTAIFSLPLTILLVSLSSLRI. The Periplasmic portion of the chain corresponds to 30–38; it reads VGEGNSYVD. Residues 39–61 traverse the membrane as a helical segment; it reads VFLSFIIFLGFIELIHGIRKILV. Topologically, residues 62–69 are cytoplasmic; the sequence is WSGWKNGS.

It is found in the cell membrane. In terms of biological role, protects a microcin H47-producer cell against microcin H47. The protein is Microcin H47 immunity protein MchI (mchI) of Escherichia coli.